The sequence spans 370 residues: Glutamate 5-kinase (370 aa).

K13 contributes to the ATP binding site. Substrate-binding residues include S54, D140, and N152. ATP is bound by residues 172–173 (SD) and 214–220 (SGGMVTK). The region spanning 278–355 (TGTLVLDAGA…GEIEAILGFR (78 aa)) is the PUA domain.

Belongs to the glutamate 5-kinase family.

It is found in the cytoplasm. The enzyme catalyses L-glutamate + ATP = L-glutamyl 5-phosphate + ADP. It functions in the pathway amino-acid biosynthesis; L-proline biosynthesis; L-glutamate 5-semialdehyde from L-glutamate: step 1/2. Its function is as follows. Catalyzes the transfer of a phosphate group to glutamate to form L-glutamate 5-phosphate. The chain is Glutamate 5-kinase from Paramagnetospirillum magneticum (strain ATCC 700264 / AMB-1) (Magnetospirillum magneticum).